A 387-amino-acid polypeptide reads, in one-letter code: GTP-binding protein 10 (387 aa).

Residues G13–I148 form the Obg domain. Residues A149–D344 enclose the OBG-type G domain. Residues G155 to S162, D202 to L206, and N278 to D281 contribute to the GTP site.

This sequence belongs to the TRAFAC class OBG-HflX-like GTPase superfamily. OBG GTPase family.

The protein resides in the nucleus. It is found in the nucleolus. Its function is as follows. May be involved in the ribosome maturation process. This Bos taurus (Bovine) protein is GTP-binding protein 10 (GTPBP10).